A 308-amino-acid polypeptide reads, in one-letter code: UDP-N-acetylenolpyruvoylglucosamine reductase (308 aa).

An FAD-binding PCMH-type domain is found at 22 to 185 (RVGGPADWLF…TEATFRAEAG (164 aa)). The active site involves Arg-165. A compositionally biased stretch (basic and acidic residues) spans 197-211 (QIARRDSSQPTKERS). The tract at residues 197–228 (QIARRDSSQPTKERSAGSTFRNPAGFSSTGRA) is disordered. Polar residues predominate over residues 212–226 (AGSTFRNPAGFSSTG). The active-site Proton donor is the Ser-214. Residue Glu-296 is part of the active site.

It belongs to the MurB family. FAD serves as cofactor.

Its subcellular location is the cytoplasm. The enzyme catalyses UDP-N-acetyl-alpha-D-muramate + NADP(+) = UDP-N-acetyl-3-O-(1-carboxyvinyl)-alpha-D-glucosamine + NADPH + H(+). The protein operates within cell wall biogenesis; peptidoglycan biosynthesis. Its function is as follows. Cell wall formation. The chain is UDP-N-acetylenolpyruvoylglucosamine reductase from Cereibacter sphaeroides (strain ATCC 17029 / ATH 2.4.9) (Rhodobacter sphaeroides).